The following is a 398-amino-acid chain: Dual-specificity RNA methyltransferase RlmN (398 aa).

The active-site Proton acceptor is the Glu119. Residues 125–364 (EADRATLCVS…TIVRKTRGDD (240 aa)) form the Radical SAM core domain. A disulfide bridge links Cys132 with Cys369. 3 residues coordinate [4Fe-4S] cluster: Cys139, Cys143, and Cys146. Residues 193–194 (GE), Ser225, 247–249 (SLH), and Asn326 contribute to the S-adenosyl-L-methionine site. Residue Cys369 is the S-methylcysteine intermediate of the active site.

It belongs to the radical SAM superfamily. RlmN family. [4Fe-4S] cluster serves as cofactor.

It localises to the cytoplasm. The enzyme catalyses adenosine(2503) in 23S rRNA + 2 reduced [2Fe-2S]-[ferredoxin] + 2 S-adenosyl-L-methionine = 2-methyladenosine(2503) in 23S rRNA + 5'-deoxyadenosine + L-methionine + 2 oxidized [2Fe-2S]-[ferredoxin] + S-adenosyl-L-homocysteine. It catalyses the reaction adenosine(37) in tRNA + 2 reduced [2Fe-2S]-[ferredoxin] + 2 S-adenosyl-L-methionine = 2-methyladenosine(37) in tRNA + 5'-deoxyadenosine + L-methionine + 2 oxidized [2Fe-2S]-[ferredoxin] + S-adenosyl-L-homocysteine. Specifically methylates position 2 of adenine 2503 in 23S rRNA and position 2 of adenine 37 in tRNAs. m2A2503 modification seems to play a crucial role in the proofreading step occurring at the peptidyl transferase center and thus would serve to optimize ribosomal fidelity. This Yersinia pestis protein is Dual-specificity RNA methyltransferase RlmN.